Consider the following 241-residue polypeptide: Small ribosomal subunit protein uS3 (241 aa).

The KH type-2 domain occupies 39–109 (IRQYITKNLS…QIRINVIEVQ (71 aa)). A disordered region spans residues 214 to 241 (EEIPMPVPSQTPRRQRRRQQFEDRSGEE). The span at 232 to 241 (QQFEDRSGEE) shows a compositional bias: basic and acidic residues.

Belongs to the universal ribosomal protein uS3 family. As to quaternary structure, part of the 30S ribosomal subunit. Forms a tight complex with proteins S10 and S14.

In terms of biological role, binds the lower part of the 30S subunit head. Binds mRNA in the 70S ribosome, positioning it for translation. This Rippkaea orientalis (strain PCC 8801 / RF-1) (Cyanothece sp. (strain PCC 8801)) protein is Small ribosomal subunit protein uS3.